The following is a 567-amino-acid chain: TGF-beta receptor type-2 (567 aa).

The signal sequence occupies residues 1 to 23 (MGRGLLRGLWPLHIVLWTRIAST). The Extracellular portion of the chain corresponds to 24 to 166 (IPPHVPKSVN…SPDLLLVIIQ (143 aa)). Cystine bridges form between Cys-51-Cys-84, Cys-54-Cys-71, Cys-61-Cys-67, Cys-77-Cys-101, Cys-121-Cys-136, and Cys-138-Cys-143. N-linked (GlcNAc...) asparagine glycans are attached at residues Asn-70 and Asn-94. Residues 167–187 (VTGVSLLPPLGIAIAVIAIFY) traverse the membrane as a helical segment. Residues 188 to 567 (CYRVHRQQKL…PEDGSLNTTK (380 aa)) are Cytoplasmic-facing. The region spanning 244–546 (IELDTLVGKG…RFSELEHPDR (303 aa)) is the Protein kinase domain. ATP contacts are provided by residues 250–258 (VGKGRFAEV) and Lys-277. The active-site Proton acceptor is the Asp-379. Ser-409, Ser-548, and Ser-553 each carry phosphoserine. The segment at 546-567 (RLSGRSCSQEKIPEDGSLNTTK) is disordered.

It belongs to the protein kinase superfamily. TKL Ser/Thr protein kinase family. TGFB receptor subfamily. Homodimer. Heterohexamer; TGFB1, TGFB2 and TGFB3 homodimeric ligands assemble a functional receptor composed of two TGFBR1 and TGFBR2 heterodimers to form a ligand-receptor heterohexamer. The respective affinity of TGFRB1 and TGFRB2 for the ligands may modulate the kinetics of assembly of the receptor and may explain the different biological activities of TGFB1, TGFB2 and TGFB3. Component of a complex composed of TSC22D1 (via N-terminus), TGFBR1 and TGFBR2; the interaction between TSC22D1 and TGFBR1 is inhibited by SMAD7 and promoted by TGFB1. Interacts with DAXX. Interacts with DYNLT4. Interacts with ZFYVE9; ZFYVE9 recruits SMAD2 and SMAD3 to the TGF-beta receptor. Interacts with and is activated by SCUBE3; this interaction does not affect TGFB1-binding to TGFBR2. Interacts with VPS39; this interaction is independent of the receptor kinase activity and of the presence of TGF-beta. Interacts with CLU. Mg(2+) serves as cofactor. Mn(2+) is required as a cofactor. Post-translationally, phosphorylated on a Ser/Thr residue in the cytoplasmic domain.

It is found in the cell membrane. The protein resides in the membrane raft. The enzyme catalyses L-threonyl-[receptor-protein] + ATP = O-phospho-L-threonyl-[receptor-protein] + ADP + H(+). The catalysed reaction is L-seryl-[receptor-protein] + ATP = O-phospho-L-seryl-[receptor-protein] + ADP + H(+). Functionally, transmembrane serine/threonine kinase forming with the TGF-beta type I serine/threonine kinase receptor, TGFBR1, the non-promiscuous receptor for the TGF-beta cytokines TGFB1, TGFB2 and TGFB3. Transduces the TGFB1, TGFB2 and TGFB3 signal from the cell surface to the cytoplasm and is thus regulating a plethora of physiological and pathological processes including cell cycle arrest in epithelial and hematopoietic cells, control of mesenchymal cell proliferation and differentiation, wound healing, extracellular matrix production, immunosuppression and carcinogenesis. The formation of the receptor complex composed of 2 TGFBR1 and 2 TGFBR2 molecules symmetrically bound to the cytokine dimer results in the phosphorylation and the activation of TGFRB1 by the constitutively active TGFBR2. Activated TGFBR1 phosphorylates SMAD2 which dissociates from the receptor and interacts with SMAD4. The SMAD2-SMAD4 complex is subsequently translocated to the nucleus where it modulates the transcription of the TGF-beta-regulated genes. This constitutes the canonical SMAD-dependent TGF-beta signaling cascade. Also involved in non-canonical, SMAD-independent TGF-beta signaling pathways. This Rattus norvegicus (Rat) protein is TGF-beta receptor type-2 (Tgfbr2).